The following is a 266-amino-acid chain: Probable matrix protein (266 aa).

The disordered stretch occupies residues 158–177 (ACSAGTGGTEEGDSDTEEEP). A compositionally biased stretch (acidic residues) spans 167–177 (EEGDSDTEEEP).

It localises to the virion. Its function is as follows. May play a role in virion budding and release by binding the ribonucleocapsid and the host membrane. The polypeptide is Probable matrix protein (Ixodidae (hardbacked ticks)).